The chain runs to 250 residues: Cysteine proteinase inhibitor 12 (250 aa).

Residues 1-32 form the signal peptide; that stretch reads MRVAATTRPASSSAAAPLPLFLLLAVAAAAAA. Cystatin domains are found at residues 49 to 137 and 156 to 202; these read GGAH…RNTG and PGWR…AEVV. The Secondary area of contact motif lies at 93–97; the sequence is QVVAG.

The protein belongs to the cystatin family. Phytocystatin subfamily.

Its subcellular location is the secreted. In terms of biological role, specific inhibitor of cysteine proteinases. Probably involved in the regulation of endogenous processes and in defense against pests and pathogens. This Oryza sativa subsp. japonica (Rice) protein is Cysteine proteinase inhibitor 12.